A 298-amino-acid polypeptide reads, in one-letter code: Ribonuclease HII (298 aa).

The disordered stretch occupies residues 1–57; it reads MIREPQKSAKAASKSSAPRARSSVAKATSTKATSSKAASSKAAPSKAGADAGAAKPR. Residues 8–55 show a composition bias toward low complexity; that stretch reads SAKAASKSSAPRARSSVAKATSTKATSSKAASSKAAPSKAGADAGAAK. The 189-residue stretch at 85–273 folds into the RNase H type-2 domain; it reads WPVAGCDEAG…VAAAWRKIEG (189 aa). A divalent metal cation-binding residues include Asp-91, Glu-92, and Asp-182.

This sequence belongs to the RNase HII family. Mn(2+) serves as cofactor. Requires Mg(2+) as cofactor.

The protein resides in the cytoplasm. It catalyses the reaction Endonucleolytic cleavage to 5'-phosphomonoester.. Its function is as follows. Endonuclease that specifically degrades the RNA of RNA-DNA hybrids. This Rhodopseudomonas palustris (strain BisB5) protein is Ribonuclease HII.